The chain runs to 293 residues: Ribosomal protein L11 methyltransferase (293 aa).

Thr145, Gly166, Asp188, and Asn230 together coordinate S-adenosyl-L-methionine.

Belongs to the methyltransferase superfamily. PrmA family.

The protein resides in the cytoplasm. The enzyme catalyses L-lysyl-[protein] + 3 S-adenosyl-L-methionine = N(6),N(6),N(6)-trimethyl-L-lysyl-[protein] + 3 S-adenosyl-L-homocysteine + 3 H(+). Functionally, methylates ribosomal protein L11. The protein is Ribosomal protein L11 methyltransferase of Salmonella heidelberg (strain SL476).